Consider the following 638-residue polypeptide: ATP-dependent zinc metalloprotease FtsH (638 aa).

Residues 1–7 (MRSTYKT) lie on the Cytoplasmic side of the membrane. The chain crosses the membrane as a helical span at residues 8–28 (IGLWVILIVLFVAFYNFFSQG). The Periplasmic segment spans residues 29 to 102 (NDQVQEPSFT…KYEREEQNSL (74 aa)). A helical membrane pass occupies residues 103–123 (WLTILGQWMPVVFLFLFFIFF). At 124-638 (MRQLQGGSGK…GLPAMEPKKA (515 aa)) the chain is on the cytoplasmic side. Position 195-202 (195-202 (GSPGTGKT)) interacts with ATP. Residue His417 coordinates Zn(2+). Residue Glu418 is part of the active site. The Zn(2+) site is built by His421 and Asp493. Positions 596–638 (GGQLTRERPPPRVNAPPKATEKKDKRKILDALEGLPAMEPKKA) are disordered. The segment covering 614–625 (ATEKKDKRKILD) has biased composition (basic and acidic residues).

It in the central section; belongs to the AAA ATPase family. The protein in the C-terminal section; belongs to the peptidase M41 family. In terms of assembly, homohexamer. Requires Zn(2+) as cofactor.

The protein localises to the cell inner membrane. Acts as a processive, ATP-dependent zinc metallopeptidase for both cytoplasmic and membrane proteins. Plays a role in the quality control of integral membrane proteins. In Myxococcus xanthus (strain DK1622), this protein is ATP-dependent zinc metalloprotease FtsH.